The following is a 233-amino-acid chain: Aspartate/glutamate leucyltransferase (233 aa).

The protein belongs to the R-transferase family. Bpt subfamily.

It localises to the cytoplasm. It carries out the reaction N-terminal L-glutamyl-[protein] + L-leucyl-tRNA(Leu) = N-terminal L-leucyl-L-glutamyl-[protein] + tRNA(Leu) + H(+). The enzyme catalyses N-terminal L-aspartyl-[protein] + L-leucyl-tRNA(Leu) = N-terminal L-leucyl-L-aspartyl-[protein] + tRNA(Leu) + H(+). Functions in the N-end rule pathway of protein degradation where it conjugates Leu from its aminoacyl-tRNA to the N-termini of proteins containing an N-terminal aspartate or glutamate. This chain is Aspartate/glutamate leucyltransferase, found in Vibrio cholerae serotype O1 (strain ATCC 39315 / El Tor Inaba N16961).